A 457-amino-acid chain; its full sequence is RuvB-like helicase 1 (457 aa).

73 to 80 (GGPSTGKT) lines the ATP pocket.

The protein belongs to the RuvB family. As to quaternary structure, may form heterododecamers with RVB2. Component of the SWR1 chromatin remodeling complex, the INO80 chromatin remodeling complex, and of the R2TP complex.

It is found in the nucleus. The catalysed reaction is ATP + H2O = ADP + phosphate + H(+). Functionally, DNA helicase which participates in several chromatin remodeling complexes, including the SWR1 and the INO80 complexes. The SWR1 complex mediates the ATP-dependent exchange of histone H2A for the H2A variant HZT1 leading to transcriptional regulation of selected genes by chromatin remodeling. The INO80 complex remodels chromatin by shifting nucleosomes and is involved in DNA repair. Also involved in pre-rRNA processing. The protein is RuvB-like helicase 1 (RVB1) of Candida glabrata (strain ATCC 2001 / BCRC 20586 / JCM 3761 / NBRC 0622 / NRRL Y-65 / CBS 138) (Yeast).